The primary structure comprises 438 residues: Lipoyl synthase, mitochondrial (438 aa).

A mitochondrion-targeting transit peptide spans 1 to 31; sequence MAASARGLRTLQSAHSSTTVPRLQLAVSRCY. Residues 34 to 57 are compositionally biased toward low complexity; sequence TTSPDPPITNSSNSSNSSNSTPTP. A disordered region spans residues 34–58; it reads TTSPDPPITNSSNSSNSSNSTPTPK. The [4Fe-4S] cluster site is built by Cys148, Cys153, Cys159, Cys179, Cys183, Cys186, and Ser394. In terms of domain architecture, Radical SAM core spans 162–383; sequence GSSKSAATAT…KERALEMGFL (222 aa).

This sequence belongs to the radical SAM superfamily. Lipoyl synthase family. The cofactor is [4Fe-4S] cluster.

The protein localises to the mitochondrion. It carries out the reaction [[Fe-S] cluster scaffold protein carrying a second [4Fe-4S](2+) cluster] + N(6)-octanoyl-L-lysyl-[protein] + 2 oxidized [2Fe-2S]-[ferredoxin] + 2 S-adenosyl-L-methionine + 4 H(+) = [[Fe-S] cluster scaffold protein] + N(6)-[(R)-dihydrolipoyl]-L-lysyl-[protein] + 4 Fe(3+) + 2 hydrogen sulfide + 2 5'-deoxyadenosine + 2 L-methionine + 2 reduced [2Fe-2S]-[ferredoxin]. The protein operates within protein modification; protein lipoylation via endogenous pathway; protein N(6)-(lipoyl)lysine from octanoyl-[acyl-carrier-protein]: step 2/2. Catalyzes the radical-mediated insertion of two sulfur atoms into the C-6 and C-8 positions of the octanoyl moiety bound to the lipoyl domains of lipoate-dependent enzymes, thereby converting the octanoylated domains into lipoylated derivatives. This is Lipoyl synthase, mitochondrial from Paracoccidioides brasiliensis (strain Pb18).